The following is a 202-amino-acid chain: Hydrogenase expression/formation protein HoxM (202 aa).

Ni(2+) contacts are provided by Glu15, Asp61, and His92.

Belongs to the peptidase A31 family.

Functionally, absolutely required for hydrogenase activity. Mediates the attachment of hydrogenase to the bacterial membrane; attachment is a requirement for enzymatic activity. In Cupriavidus necator (strain ATCC 17699 / DSM 428 / KCTC 22496 / NCIMB 10442 / H16 / Stanier 337) (Ralstonia eutropha), this protein is Hydrogenase expression/formation protein HoxM (hoxM).